The sequence spans 340 residues: Glyceraldehyde-3-phosphate dehydrogenase (340 aa).

NAD(+) contacts are provided by residues threonine 11–isoleucine 12 and glycine 109. Position 138-140 (serine 138–asparagine 140) interacts with D-glyceraldehyde 3-phosphate. Cysteine 139 acts as the Nucleophile in catalysis. Arginine 167 serves as a coordination point for NAD(+). Residue histidine 193–alanine 194 participates in D-glyceraldehyde 3-phosphate binding. Position 300 (glutamine 300) interacts with NAD(+).

It belongs to the glyceraldehyde-3-phosphate dehydrogenase family. Homotetramer.

It localises to the cytoplasm. The catalysed reaction is D-glyceraldehyde 3-phosphate + phosphate + NADP(+) = (2R)-3-phospho-glyceroyl phosphate + NADPH + H(+). The enzyme catalyses D-glyceraldehyde 3-phosphate + phosphate + NAD(+) = (2R)-3-phospho-glyceroyl phosphate + NADH + H(+). It functions in the pathway carbohydrate degradation; glycolysis; pyruvate from D-glyceraldehyde 3-phosphate: step 1/5. This Saccharolobus islandicus (strain L.S.2.15 / Lassen #1) (Sulfolobus islandicus) protein is Glyceraldehyde-3-phosphate dehydrogenase.